Consider the following 156-residue polypeptide: Small ribosomal subunit protein uS7 (156 aa).

Belongs to the universal ribosomal protein uS7 family. In terms of assembly, part of the 30S ribosomal subunit. Contacts proteins S9 and S11.

Functionally, one of the primary rRNA binding proteins, it binds directly to 16S rRNA where it nucleates assembly of the head domain of the 30S subunit. Is located at the subunit interface close to the decoding center, probably blocks exit of the E-site tRNA. This Novosphingobium aromaticivorans (strain ATCC 700278 / DSM 12444 / CCUG 56034 / CIP 105152 / NBRC 16084 / F199) protein is Small ribosomal subunit protein uS7.